The chain runs to 390 residues: Cyclic amide hydrolase (390 aa).

An RU A region spans residues 1–118 (MPNPEASLSP…TVVTQEWVAD (118 aa)). Residues Arg-66 and 97 to 98 (SG) each bind substrate. The RU B stretch occupies residues 127 to 268 (GLVVGRGHTE…GEVLLLANSA (142 aa)). Residue Lys-177 is part of the active site. Substrate-binding positions include Asn-213, 251–252 (SS), Lys-346, and 365–366 (SG). Catalysis depends on Ser-251, which acts as the Nucleophile. The tract at residues 274-390 (LRIGHGITRD…VAAVVRRLPA (117 aa)) is RU C.

The protein belongs to the cyclic amide hydrolase (CyAH) family. In terms of assembly, homotetramer; disulfide-linked. The disulfide forms between 2 monomers in the tetramer, such that each tetramer contains 2 sets of vicinal disulfides.

Its function is as follows. Cyclic amide hydrolase of unknown substrate specificity. Catalyzes the hydrolytic ring-opening of a cyclic amide. Does not act on cyanuric acid nor barbituric acid. This chain is Cyclic amide hydrolase, found in Pseudofrankia inefficax (strain DSM 45817 / CECT 9037 / DDB 130130 / EuI1c) (Frankia inefficax).